Here is a 167-residue protein sequence, read N- to C-terminus: Putative ripening-related protein 6 (167 aa).

The N-terminal stretch at 1 to 23 (MANAKQLALFAMLVLLLASCAAA) is a signal peptide. The tract at residues 28–57 (KPDPCDGGGGGVDSHLPPGMRRCSSPAVSE) is disordered.

This sequence belongs to the kiwellin family.

The protein localises to the secreted. The polypeptide is Putative ripening-related protein 6 (Oryza sativa subsp. japonica (Rice)).